Reading from the N-terminus, the 853-residue chain is Auxin response factor 23 (853 aa).

The tract at residues 121–141 (KQQEDNGSTEEEVPSAPAAGH) is disordered. A DNA-binding region (TF-B3) is located at residues 149 to 251 (FCKTLTASDT…ELRVGVRRAM (103 aa)). Disordered regions lie at residues 422-471 (ESEP…NNTP) and 647-723 (PAKS…QGVS). Polar residues predominate over residues 425 to 455 (PNGTQRTFQTQENATPKSGFGNSSELESAQK). The segment covering 672 to 686 (EWRRPDVTEVEKCSD) has biased composition (basic and acidic residues). The span at 706 to 723 (PSSQQASRNMSCKSQGVS) shows a compositional bias: polar residues. In terms of domain architecture, PB1 spans 725-809 (RSCKKVHKQG…HKIFIYTREE (85 aa)). The segment at 815-853 (PGTLNSRSEDSHANSMERGSVGREMRGCLSTSSLNSENC) is disordered. Polar residues predominate over residues 843–853 (LSTSSLNSENC).

Belongs to the ARF family. Homodimers and heterodimers.

The protein resides in the nucleus. Functionally, auxin response factors (ARFs) are transcriptional factors that bind specifically to the DNA sequence 5'-TGTCTC-3' found in the auxin-responsive promoter elements (AuxREs). In Oryza sativa subsp. indica (Rice), this protein is Auxin response factor 23 (ARF23).